We begin with the raw amino-acid sequence, 184 residues long: Glutathione-regulated potassium-efflux system ancillary protein KefG (184 aa).

It belongs to the NAD(P)H dehydrogenase (quinone) family. KefG subfamily. Interacts with KefB.

The protein localises to the cell inner membrane. It catalyses the reaction a quinone + NADH + H(+) = a quinol + NAD(+). The catalysed reaction is a quinone + NADPH + H(+) = a quinol + NADP(+). Its function is as follows. Regulatory subunit of a potassium efflux system that confers protection against electrophiles. Required for full activity of KefB. This chain is Glutathione-regulated potassium-efflux system ancillary protein KefG, found in Cronobacter sakazakii (strain ATCC BAA-894) (Enterobacter sakazakii).